Consider the following 281-residue polypeptide: Arylamine N-acetyltransferase (281 aa).

C69 serves as the catalytic Acyl-thioester intermediate. Residues H107 and D122 contribute to the active site. N6-acetyllysine is present on residues K214 and K281.

This sequence belongs to the arylamine N-acetyltransferase family. As to quaternary structure, homodimer. In terms of processing, acetylated on Lys-214 and Lys-281. Deacetylated by CobB.

The protein resides in the cytoplasm. It catalyses the reaction an arylamine + acetyl-CoA = an N-acetylarylamine + CoA. It carries out the reaction an N-hydroxyarylamine + acetyl-CoA = an N-acetoxyarylamine + CoA. Inhibited by salicylic acid, acetylsalicylic acid, 2,6-dichrolo-4-nitrophenol, N-ethylmaleimide and iodoacetamide. Catalyzes the acetyl-CoA-dependent N-acetylation of aromatic amines, and, probably, the O-acetylation of N-hydroxyarylamines. In vitro, catalyzes the N-acetylation of various arylamines such as aminobenzoic acid, aminophenol, aminotoluene, phenetidine, anisidine, aniline, isoniazid and 2-amino-fluorene. N-hydroxyarylamine O-acetyltransferase activity has not been assayed directly, however, NhoA activity is required for the mutagenicity of nitroaromatic compounds, suggesting that it also has O-acetyltransferase activity. In Escherichia coli (strain K12), this protein is Arylamine N-acetyltransferase (nhoA).